Reading from the N-terminus, the 407-residue chain is 1-deoxy-D-xylulose 5-phosphate reductoisomerase (407 aa).

Residues Thr-10, Gly-11, Ser-12, Ile-13, Gly-36, and Asn-131 each coordinate NADPH. Lys-132 provides a ligand contact to 1-deoxy-D-xylulose 5-phosphate. Position 133 (Glu-133) interacts with NADPH. Asp-155 provides a ligand contact to Mn(2+). Residues Ser-156, Glu-157, Ser-181, and His-204 each coordinate 1-deoxy-D-xylulose 5-phosphate. Residue Glu-157 participates in Mn(2+) binding. Gly-210 contributes to the NADPH binding site. 1-deoxy-D-xylulose 5-phosphate is bound by residues Ser-217, Asn-222, Lys-223, and Glu-226. Glu-226 is a binding site for Mn(2+).

Belongs to the DXR family. Mg(2+) is required as a cofactor. Requires Mn(2+) as cofactor.

The catalysed reaction is 2-C-methyl-D-erythritol 4-phosphate + NADP(+) = 1-deoxy-D-xylulose 5-phosphate + NADPH + H(+). It participates in isoprenoid biosynthesis; isopentenyl diphosphate biosynthesis via DXP pathway; isopentenyl diphosphate from 1-deoxy-D-xylulose 5-phosphate: step 1/6. Catalyzes the NADPH-dependent rearrangement and reduction of 1-deoxy-D-xylulose-5-phosphate (DXP) to 2-C-methyl-D-erythritol 4-phosphate (MEP). In Cutibacterium acnes (strain DSM 16379 / KPA171202) (Propionibacterium acnes), this protein is 1-deoxy-D-xylulose 5-phosphate reductoisomerase.